Here is a 253-residue protein sequence, read N- to C-terminus: Dihydroanticapsin 7-dehydrogenase (253 aa).

9–31 is a binding site for NAD(+); that stretch reads LITGGASGIGYAAVQAFLNQQAN. Substrate is bound at residue Ser-139. Tyr-152 serves as the catalytic Proton acceptor.

Belongs to the short-chain dehydrogenases/reductases (SDR) family.

It carries out the reaction L-dihydroanticapsin + NAD(+) = L-anticapsin + NADH + H(+). It participates in antibiotic biosynthesis; bacilysin biosynthesis. Part of the bacABCDEFG operon responsible for the biosynthesis of bacilysin, an irreversible inactivator of the glutaminase domain of glucosamine synthetase. Catalyzes the dehydrogenation of the C7-hydroxyl group in the 4S-tetrahydrotyrosine (4S-H4Tyr) to yield anticapsin (epoxycyclohexanonyl-Ala). This Bacillus subtilis protein is Dihydroanticapsin 7-dehydrogenase.